The primary structure comprises 881 residues: Armadillo repeat-containing protein 3 (881 aa).

ARM repeat units follow at residues 15-54, 57-96, 98-138, 140-179, 181-220, 222-262, 264-304, 306-345, 346-385, 388-427, 429-468, and 470-509; these read DVFD…KFAL, EENK…ILAS, SDVK…NMSV, YTGK…NLVQ, FQCR…VITC, KEAR…NCLE, MDTM…KAAY, PENR…ALCE, NLSC…NLTT, PANA…NMAT, EPLR…ATAC, and VEAR…VCAG. 2 S-palmitoyl cysteine lipidation sites follow: C507 and C518. A disordered region spans residues 605-659; the sequence is NNKSDTSPPPSMEDKSSDVGYGRSISSSSSLRRGSKEKANAIFGSPTEEKSEPAS. Residues 622–636 are compositionally biased toward low complexity; the sequence is DVGYGRSISSSSSLR.

Homodimer. Interacts with PIK3C3, PIK3R4 and BECN1. Interacts (via ARM domains) with ATG14. In terms of processing, palmitoylation is important for its function in autophagy. Testis-specific.

Functionally, essential for male fertility and sperm motility. During spermatogenesis, promotes the autophagic degradation of excessive ribosomes, providing energy resources for mitochondria and thus ensuring sperm flagellar motility. In Mus musculus (Mouse), this protein is Armadillo repeat-containing protein 3 (Armc3).